Here is an 804-residue protein sequence, read N- to C-terminus: Type 2 DNA topoisomerase 6 subunit B (804 aa).

ATP-binding positions include Asn-58, Asp-89, 110-111, 120-127, and Lys-629; these read SR and GQQGIGIS.

This sequence belongs to the TOP6B family. Homodimer. Heterotetramer of two Top6A and two Top6B chains.

It carries out the reaction ATP-dependent breakage, passage and rejoining of double-stranded DNA.. Functionally, relaxes both positive and negative superturns and exhibits a strong decatenase activity. The sequence is that of Type 2 DNA topoisomerase 6 subunit B from Halobacterium salinarum (strain ATCC 29341 / DSM 671 / R1).